Consider the following 833-residue polypeptide: 3-hydroxy-3-methylglutaryl-coenzyme A reductase (833 aa).

The next 4 membrane-spanning stretches (helical) occupy residues 10–32, 91–117, 160–180, and 301–321; these read FCAR…AASV, YLLI…LFWS, LALL…LVGV, and SADY…FVFF. Residues 322–419 are linker; it reads EEQRNWVIDM…EEVVMLVEQS (98 aa). The interval 347-374 is disordered; that stretch reads KPKFSVGDDSNSEVSTQTEGVLEDEWPT. Residues 354–365 show a composition bias toward polar residues; it reads DDSNSEVSTQTE. A catalytic region spans residues 420 to 833; sequence HIPLHRLEAV…ENITLKVPTL (414 aa). Active-site charge relay system residues include E504 and K635. Residue N680 is glycosylated (N-linked (GlcNAc...) asparagine). The Charge relay system role is filled by D711. N715 and N720 each carry an N-linked (GlcNAc...) asparagine glycan. H809 serves as the catalytic Proton donor. N-linked (GlcNAc...) asparagine glycans are attached at residues N813 and N825.

It belongs to the HMG-CoA reductase family.

The protein localises to the endoplasmic reticulum membrane. The enzyme catalyses (R)-mevalonate + 2 NADP(+) + CoA = (3S)-3-hydroxy-3-methylglutaryl-CoA + 2 NADPH + 2 H(+). Its pathway is metabolic intermediate biosynthesis; (R)-mevalonate biosynthesis; (R)-mevalonate from acetyl-CoA: step 3/3. With respect to regulation, the activity of HMG-CoA-reductase is suppressed by exogenous mevalonate. Functionally, synthesis of mevalonate for the production of non-sterol isoprenoids, which are essential for growth differentiation. The protein is 3-hydroxy-3-methylglutaryl-coenzyme A reductase (HMGR) of Agrotis ipsilon (Black cutworm moth).